An 812-amino-acid polypeptide reads, in one-letter code: MTEKSHKKTAKGRAGSPSPTSARNKKADNGARGNKVSERLKAVKELQKTETKKARPEHVVNLIGDALWLMGLAATLYLAISLISFDMGDPSWSHSSPVVEDVANWGGLFGAYVADVGYYLFGWSFWWWIAAACVVLYKNFRLHAKQTENEAYNHKIAAAALFVLTVFSPVLEYFVLGGKYADSLPVGAGGMVGIRVGAVFAWLLGKSGSLLIILVVLLLSLSLLVQISWLEFLNGAGRAVQNRLSALSGKVMALGKRRPNTKTDGVDTQNTRRMVKEAKNITAKPVALPEGSSSNRKSVAVSVAPPPKIQVSLFEDDEPRQAGEYHKPTLNLLRIPDSEPVSINPAELERTAELIESKLAEFGIGVQVVSATSGPVITRYEIEPAQGVKGSQIVALSKDLARSMSLQSVRIVETIAGKNTMGIELPNDKRQDVMLSEILSSPVFAEAKSKLTVALGKDIAGTPVVGDLAKMPHLLVAGMTGSGKSVGVNGMIMSMLFKATPDEVRFIMIDPKMLELSIYDGIPHLLCPVVTDMREAGQALNWCVAEMEKRYRLLSHAGVRNLEGFNQKVEAAKAAGKPLLNPFSLNPDEPEPLEKLPLIVVVIDELADLMMTERKAVEQQIARLAQKARAAGIHMIVATQRPSVDVVTGLIKANIPTRMAFTVQSKIDSRTILDQMGADELLKYGDSLFLQPGSAEPTRLQGAFVSDDEVHQVVNYVKSQAPADYIEGLLSGEAALETANIVNPNADSDELFDQAVAYVLESKKTSISSLQRQLRIGYNRAANLMEALENAGVVSSTDLNGSRKILAHKDHL.

Basic residues predominate over residues 1–11; the sequence is MTEKSHKKTAK. A disordered region spans residues 1–36; sequence MTEKSHKKTAKGRAGSPSPTSARNKKADNGARGNKV. Over residues 25 to 36 the composition is skewed to basic and acidic residues; the sequence is KKADNGARGNKV. Transmembrane regions (helical) follow at residues 63 to 83, 116 to 136, 156 to 176, 184 to 204, and 210 to 230; these read IGDA…ISLI, VGYY…CVVL, IAAA…YFVL, LPVG…AWLL, and LLII…ISWL. At 231-812 the chain is on the cytoplasmic side; it reads EFLNGAGRAV…RKILAHKDHL (582 aa). Residues 461 to 670 enclose the FtsK domain; it reads GTPVVGDLAK…FTVQSKIDSR (210 aa). Residue 481–486 coordinates ATP; that stretch reads GSGKSV.

This sequence belongs to the FtsK/SpoIIIE/SftA family. Homohexamer. Forms a ring that surrounds DNA.

It is found in the cell inner membrane. Its function is as follows. Essential cell division protein that coordinates cell division and chromosome segregation. The N-terminus is involved in assembly of the cell-division machinery. The C-terminus functions as a DNA motor that moves dsDNA in an ATP-dependent manner towards the dif recombination site, which is located within the replication terminus region. Translocation stops specifically at Xer-dif sites, where FtsK interacts with the Xer recombinase, allowing activation of chromosome unlinking by recombination. FtsK orienting polar sequences (KOPS) guide the direction of DNA translocation. FtsK can remove proteins from DNA as it translocates, but translocation stops specifically at XerCD-dif site, thereby preventing removal of XerC and XerD from dif. The protein is DNA translocase FtsK 1 (ftsK1) of Neisseria meningitidis serogroup B (strain ATCC BAA-335 / MC58).